The following is a 207-amino-acid chain: LPS-assembly lipoprotein LptE (207 aa).

The signal sequence occupies residues 1 to 19 (MRHRILTLLLGLAVLVTAG). A lipid anchor (N-palmitoyl cysteine) is attached at cysteine 20. Cysteine 20 carries S-diacylglycerol cysteine lipidation. Residues 168 to 207 (KNTQKNGDKPVSDANAAQGSTPTAVNETTLGEPAVSTSAK) form a disordered region. Residues 182-207 (NAAQGSTPTAVNETTLGEPAVSTSAK) show a composition bias toward polar residues.

It belongs to the LptE lipoprotein family. In terms of assembly, component of the lipopolysaccharide transport and assembly complex. Interacts with LptD.

It localises to the cell outer membrane. Its function is as follows. Together with LptD, is involved in the assembly of lipopolysaccharide (LPS) at the surface of the outer membrane. Required for the proper assembly of LptD. Binds LPS and may serve as the LPS recognition site at the outer membrane. This is LPS-assembly lipoprotein LptE from Yersinia pseudotuberculosis serotype O:1b (strain IP 31758).